Reading from the N-terminus, the 114-residue chain is uncharacterized protein (114 aa).

A signal peptide spans 1–19; it reads MKASYLVLIFISIFSMAQA. Position 41 is a phosphoserine (Ser41).

The protein belongs to the protease inhibitor I9 family.

This is an uncharacterized protein from Saccharomyces cerevisiae (strain ATCC 204508 / S288c) (Baker's yeast).